Reading from the N-terminus, the 755-residue chain is Beta-galactosidase (755 aa).

The active-site Proton donor is the glutamate 382. Catalysis depends on glutamate 463, which acts as the Nucleophile.

This sequence belongs to the glycosyl hydrolase 2 family.

The enzyme catalyses Hydrolysis of terminal non-reducing beta-D-galactose residues in beta-D-galactosides.. This is Beta-galactosidase (lacZ) from Rhizobium meliloti (Ensifer meliloti).